The chain runs to 165 residues: Peptide methionine sulfoxide reductase MsrA (165 aa).

Cysteine 10 is a catalytic residue.

Belongs to the MsrA Met sulfoxide reductase family.

The catalysed reaction is L-methionyl-[protein] + [thioredoxin]-disulfide + H2O = L-methionyl-(S)-S-oxide-[protein] + [thioredoxin]-dithiol. It catalyses the reaction [thioredoxin]-disulfide + L-methionine + H2O = L-methionine (S)-S-oxide + [thioredoxin]-dithiol. Has an important function as a repair enzyme for proteins that have been inactivated by oxidation. Catalyzes the reversible oxidation-reduction of methionine sulfoxide in proteins to methionine. This is Peptide methionine sulfoxide reductase MsrA from Campylobacter jejuni (strain RM1221).